A 190-amino-acid chain; its full sequence is Xanthine phosphoribosyltransferase (190 aa).

Xanthine-binding residues include Leu-20 and Asn-27. 128–132 (ANGEA) contacts 5-phospho-alpha-D-ribose 1-diphosphate. Xanthine is bound at residue Lys-156.

This sequence belongs to the purine/pyrimidine phosphoribosyltransferase family. Xpt subfamily. In terms of assembly, homodimer.

It localises to the cytoplasm. It carries out the reaction XMP + diphosphate = xanthine + 5-phospho-alpha-D-ribose 1-diphosphate. The protein operates within purine metabolism; XMP biosynthesis via salvage pathway; XMP from xanthine: step 1/1. Functionally, converts the preformed base xanthine, a product of nucleic acid breakdown, to xanthosine 5'-monophosphate (XMP), so it can be reused for RNA or DNA synthesis. This is Xanthine phosphoribosyltransferase from Clostridium botulinum (strain Eklund 17B / Type B).